The primary structure comprises 253 residues: Dihydroanticapsin 7-dehydrogenase (253 aa).

9 to 31 (LITGGASGIGYAAVQAFLNQQAN) is a binding site for NAD(+). Ser139 contacts substrate. Tyr152 serves as the catalytic Proton acceptor.

The protein belongs to the short-chain dehydrogenases/reductases (SDR) family.

It catalyses the reaction L-dihydroanticapsin + NAD(+) = L-anticapsin + NADH + H(+). Its pathway is antibiotic biosynthesis; bacilysin biosynthesis. Its function is as follows. Part of the bacABCDEFG operon responsible for the biosynthesis of bacilysin, an irreversible inactivator of the glutaminase domain of glucosamine synthetase. Catalyzes the dehydrogenation of the C7-hydroxyl group in the 4S-tetrahydrotyrosine (4S-H4Tyr) to yield anticapsin (epoxycyclohexanonyl-Ala). The protein is Dihydroanticapsin 7-dehydrogenase of Bacillus subtilis.